Reading from the N-terminus, the 107-residue chain is Regulatory protein SoxS (107 aa).

The 99-residue stretch at 8-106 folds into the HTH araC/xylS-type domain; it reads QTLIEWIDEH…DRTPSDYRHR (99 aa). 2 consecutive DNA-binding regions (H-T-H motif) follow at residues 25 to 46 and 73 to 96; these read DVVA…RTVT and IFDI…RREF.

It is found in the cytoplasm. Functionally, transcriptional activator of the superoxide response regulon of E.coli that includes at least 10 genes such as sodA, nfo, zwf and micF. Binds the DNA sequence 5'-GCACN(7)CAA-3'. It also facilitates the subsequent binding of RNA polymerase to the micF and the nfo promoters. The sequence is that of Regulatory protein SoxS (soxS) from Salmonella typhimurium (strain LT2 / SGSC1412 / ATCC 700720).